The primary structure comprises 445 residues: Protein trichome berefringence-like 7 (445 aa).

Residues 69-89 (IIAGTIVSFLVIIAGGYLYVV) form a helical; Signal-anchor for type II membrane protein membrane-spanning segment. Residues 188–190 (GDS) carry the GDS motif motif. The DCXHWCLPGXXDXWN motif motif lies at 418–432 (DCSHWCLPGVPDIWN).

Belongs to the PC-esterase family. TBL subfamily.

It localises to the membrane. Functionally, may act as a bridging protein that binds pectin and other cell wall polysaccharides. Probably involved in maintaining esterification of pectins. May be involved in the specific O-acetylation of cell wall polymers. The sequence is that of Protein trichome berefringence-like 7 (TBL7) from Arabidopsis thaliana (Mouse-ear cress).